The sequence spans 296 residues: 4-hydroxy-tetrahydrodipicolinate synthase (296 aa).

Thr49 lines the pyruvate pocket. Tyr137 serves as the catalytic Proton donor/acceptor. Lys165 (schiff-base intermediate with substrate) is an active-site residue. Ile207 contacts pyruvate.

Belongs to the DapA family. Homotetramer; dimer of dimers.

The protein resides in the cytoplasm. The enzyme catalyses L-aspartate 4-semialdehyde + pyruvate = (2S,4S)-4-hydroxy-2,3,4,5-tetrahydrodipicolinate + H2O + H(+). The protein operates within amino-acid biosynthesis; L-lysine biosynthesis via DAP pathway; (S)-tetrahydrodipicolinate from L-aspartate: step 3/4. In terms of biological role, catalyzes the condensation of (S)-aspartate-beta-semialdehyde [(S)-ASA] and pyruvate to 4-hydroxy-tetrahydrodipicolinate (HTPA). The sequence is that of 4-hydroxy-tetrahydrodipicolinate synthase from Bradyrhizobium diazoefficiens (strain JCM 10833 / BCRC 13528 / IAM 13628 / NBRC 14792 / USDA 110).